A 108-amino-acid chain; its full sequence is Nucleoid-associated protein BamMC406_1737 (108 aa).

A compositionally biased stretch (polar residues) spans 85-95 (ATSQEKMSGMT). Residues 85–108 (ATSQEKMSGMTSGLPLPPGFKLPF) are disordered. Residues 99–108 (PLPPGFKLPF) are compositionally biased toward pro residues.

The protein belongs to the YbaB/EbfC family. Homodimer.

Its subcellular location is the cytoplasm. The protein localises to the nucleoid. Its function is as follows. Binds to DNA and alters its conformation. May be involved in regulation of gene expression, nucleoid organization and DNA protection. The polypeptide is Nucleoid-associated protein BamMC406_1737 (Burkholderia ambifaria (strain MC40-6)).